Reading from the N-terminus, the 178-residue chain is V-type proton ATPase subunit c''2 (178 aa).

The Lumenal portion of the chain corresponds to 1 to 24 (MSGVAIHASSWGAALVRISPYTFS). The helical transmembrane segment at 25–45 (AIGIAISIGVSVLGAAWGIYI) threads the bilayer. Topologically, residues 46-64 (TGSSLIGAAIEAPRITSKN) are cytoplasmic. Residues 65–85 (LISVIFCEAVAIYGVIVAIIL) form a helical membrane-spanning segment. Over 86-108 (QTKLESVPSSKMYDAESLRAGYA) the chain is Lumenal. The helical transmembrane segment at 109 to 129 (IFASGIIVGFANLVCGLCVGI) threads the bilayer. At 130–147 (IGSSCALSDAQNSTLFVK) the chain is on the cytoplasmic side. The chain crosses the membrane as a helical span at residues 148 to 168 (ILVIEIFGSALGLFGVIVGII). The Lumenal portion of the chain corresponds to 169–178 (MSAQATWPTK).

Belongs to the V-ATPase proteolipid subunit family. As to quaternary structure, V-ATPase is a heteromultimeric enzyme composed of a peripheral catalytic V1 complex (components A to H) attached to an integral membrane V0 proton pore complex (components: a, c, c'', d and e). The proteolipid components c and c'' are present as a hexameric ring that forms the proton-conducting pore. Interacts with APD2.

It localises to the endoplasmic reticulum membrane. The protein localises to the golgi apparatus membrane. Functionally, proton-conducting pore forming subunit of the membrane integral V0 complex of vacuolar ATPase. V-ATPase is responsible for acidifying a variety of intracellular compartments in eukaryotic cells. The protein is V-type proton ATPase subunit c''2 (VHA-c''2) of Arabidopsis thaliana (Mouse-ear cress).